Here is a 170-residue protein sequence, read N- to C-terminus: Orotate phosphoribosyltransferase (170 aa).

5-phospho-alpha-D-ribose 1-diphosphate is bound by residues arginine 86, lysine 87, lysine 90, histidine 92, and glutamate 111–serine 119. Residues threonine 115 and arginine 143 each contribute to the orotate site.

This sequence belongs to the purine/pyrimidine phosphoribosyltransferase family. PyrE subfamily. Homodimer. Requires Mg(2+) as cofactor.

The enzyme catalyses orotidine 5'-phosphate + diphosphate = orotate + 5-phospho-alpha-D-ribose 1-diphosphate. It participates in pyrimidine metabolism; UMP biosynthesis via de novo pathway; UMP from orotate: step 1/2. Functionally, catalyzes the transfer of a ribosyl phosphate group from 5-phosphoribose 1-diphosphate to orotate, leading to the formation of orotidine monophosphate (OMP). The polypeptide is Orotate phosphoribosyltransferase (Methanoculleus marisnigri (strain ATCC 35101 / DSM 1498 / JR1)).